We begin with the raw amino-acid sequence, 430 residues long: Serine--tRNA ligase (430 aa).

L-serine is bound at residue 237 to 239 (TAE). An ATP-binding site is contributed by 268–270 (RSE). Glutamate 291 lines the L-serine pocket. An ATP-binding site is contributed by 355–358 (EISS). Serine 391 is an L-serine binding site.

This sequence belongs to the class-II aminoacyl-tRNA synthetase family. Type-1 seryl-tRNA synthetase subfamily. In terms of assembly, homodimer. The tRNA molecule binds across the dimer.

It localises to the cytoplasm. The catalysed reaction is tRNA(Ser) + L-serine + ATP = L-seryl-tRNA(Ser) + AMP + diphosphate + H(+). It catalyses the reaction tRNA(Sec) + L-serine + ATP = L-seryl-tRNA(Sec) + AMP + diphosphate + H(+). It functions in the pathway aminoacyl-tRNA biosynthesis; selenocysteinyl-tRNA(Sec) biosynthesis; L-seryl-tRNA(Sec) from L-serine and tRNA(Sec): step 1/1. Functionally, catalyzes the attachment of serine to tRNA(Ser). Is also able to aminoacylate tRNA(Sec) with serine, to form the misacylated tRNA L-seryl-tRNA(Sec), which will be further converted into selenocysteinyl-tRNA(Sec). This chain is Serine--tRNA ligase, found in Escherichia coli O139:H28 (strain E24377A / ETEC).